The primary structure comprises 120 residues: Large ribosomal subunit protein bL12 (120 aa).

This sequence belongs to the bacterial ribosomal protein bL12 family. Homodimer. Part of the ribosomal stalk of the 50S ribosomal subunit. Forms a multimeric L10(L12)X complex, where L10 forms an elongated spine to which 2 to 4 L12 dimers bind in a sequential fashion. Binds GTP-bound translation factors.

Functionally, forms part of the ribosomal stalk which helps the ribosome interact with GTP-bound translation factors. Is thus essential for accurate translation. This Pseudoalteromonas translucida (strain TAC 125) protein is Large ribosomal subunit protein bL12.